The following is a 147-amino-acid chain: Acidic phospholipase A2 beta-bungarotoxin A4 chain (147 aa).

A signal peptide spans 1–19 (MNPAHLLVLSAVCVSLLGA). The propeptide occupies 20 to 27 (ANIPPQHL). Intrachain disulfides connect C54–C146, C56–C72, C71–C127, C78–C120, C88–C113, and C106–C118. Y55, G57, and G59 together coordinate Ca(2+). The active site involves H75. D76 is a Ca(2+) binding site. D121 is a catalytic residue.

It belongs to the phospholipase A2 family. Group I subfamily. D49 sub-subfamily. Heterodimer; disulfide-linked. The A chains have phospholipase A2 activity and the B chains show homology with the basic protease inhibitors. Ca(2+) is required as a cofactor. Expressed by the venom gland.

The protein localises to the secreted. It catalyses the reaction a 1,2-diacyl-sn-glycero-3-phosphocholine + H2O = a 1-acyl-sn-glycero-3-phosphocholine + a fatty acid + H(+). In terms of biological role, snake venom phospholipase A2 (PLA2) that inhibits neuromuscular transmission by blocking acetylcholine release from the nerve termini. PLA2 catalyzes the calcium-dependent hydrolysis of the 2-acyl groups in 3-sn-phosphoglycerides. The polypeptide is Acidic phospholipase A2 beta-bungarotoxin A4 chain (Bungarus multicinctus (Many-banded krait)).